The following is a 263-amino-acid chain: uncharacterized protein (263 aa).

Residues 1–22 form the signal peptide; it reads MEYLKRLALLISVIILTIFIMG. Cys-23 carries N-palmitoyl cysteine lipidation. Cys-23 is lipidated: S-diacylglycerol cysteine.

The protein belongs to the staphylococcal tandem lipoprotein family.

It is found in the cell membrane. This is an uncharacterized protein from Staphylococcus aureus (strain USA300).